The following is a 175-amino-acid chain: Alpha-crystallin B chain (175 aa).

An N-acetylmethionine modification is found at M1. At S19 the chain carries Phosphoserine. O-linked (GlcNAc) serine glycosylation is present at S41. S45 and S59 each carry phosphoserine. A sHSP domain is found at 56–164 (RAPSWFDTGL…PERTIPITRE (109 aa)). H83 is a binding site for Zn(2+). K92 is subject to N6-acetyllysine; partial. The Zn(2+) site is built by H104, E106, H111, and H119. The disordered stretch occupies residues 146–175 (NGPRKQVSGPERTIPITREEKPAVTAAPKK). The residue at position 166 (K166) is an N6-acetyllysine. An O-linked (GlcNAc) threonine glycan is attached at T170.

The protein belongs to the small heat shock protein (HSP20) family. In terms of assembly, heteromer composed of three CRYAA and one CRYAB subunits. Aggregates with homologous proteins, including the small heat shock protein HSPB1, to form large heteromeric complexes. Inter-subunit bridging via zinc ions enhances stability, which is crucial as there is no protein turn over in the lens. Interacts with HSPBAP1 and TTN/titin. Interacts with TMEM109; in the cellular response to DNA damage. Interacts with DES; binds rapidly during early stages of DES filament assembly and a reduced binding seen in the later stages. Interacts with TMED10; the interaction mediates the translocation from the cytoplasm into the ERGIC (endoplasmic reticulum-Golgi intermediate compartment) and thereby secretion. Interacts with ATP6V1A and with MTOR, forming a ternary complex. In terms of tissue distribution, lens as well as other tissues. Expressed in myocardial tissue.

It localises to the cytoplasm. Its subcellular location is the nucleus. The protein localises to the secreted. The protein resides in the lysosome. In terms of biological role, may contribute to the transparency and refractive index of the lens. Has chaperone-like activity, preventing aggregation of various proteins under a wide range of stress conditions. In lens epithelial cells, stabilizes the ATP6V1A protein, preventing its degradation by the proteasome. The sequence is that of Alpha-crystallin B chain from Homo sapiens (Human).